A 46-amino-acid chain; its full sequence is Large ribosomal subunit protein bL34 (46 aa).

It belongs to the bacterial ribosomal protein bL34 family.

This Trichodesmium erythraeum (strain IMS101) protein is Large ribosomal subunit protein bL34.